The sequence spans 589 residues: Ufm1-specific protease (589 aa).

The tract at residues 1–22 (MTNSQTVSLIGPTQMAPQSTPP) is disordered. Active-site residues include Cys421, Asp545, and His547.

It belongs to the peptidase C78 family. As to quaternary structure, interacts with odr-4. As to expression, expressed in head and tail neurons. Expressed in the amphid head neurons ADL, ASI, ASH, ASJ, ASG, ADF, ASK, AWA, AWB, AWC, and in two tail neurons, the phasmid tail neurons PHA and PHB.

It localises to the endoplasmic reticulum membrane. The protein localises to the cytoplasm. The protein resides in the perinuclear region. Its function is as follows. Thiol protease which recognizes and hydrolyzes the peptide bond at the C-terminal Gly of ufm-1, a ubiquitin-like modifier protein bound to a number of target proteins. Required, with oct-4, for the localization of a subset of 7 transmembrane domain odorant receptors, including odr-10, to the cilia of olfactory neurons AWA and AWC. Operates in aggregation behavior, and responses to oxygen levels. The protein is Ufm1-specific protease of Caenorhabditis elegans.